Reading from the N-terminus, the 321-residue chain is tRNA pseudouridine synthase B (321 aa).

The Nucleophile role is filled by Asp-47.

This sequence belongs to the pseudouridine synthase TruB family. Type 1 subfamily.

The catalysed reaction is uridine(55) in tRNA = pseudouridine(55) in tRNA. Functionally, responsible for synthesis of pseudouridine from uracil-55 in the psi GC loop of transfer RNAs. The sequence is that of tRNA pseudouridine synthase B from Shewanella baltica (strain OS223).